The sequence spans 484 residues: Sushi domain-containing protein 4 (484 aa).

The N-terminal stretch at 1 to 35 (MFHHADKGGKKSAFGHPVCGQIILSIILLRPPLLV) is a signal peptide. Sushi domains are found at residues 46 to 110 (QICK…VCLS), 111 to 168 (EDCL…QPTC), 169 to 230 (QGCL…RCLD), and 232 to 295 (EACS…YCVK). 8 cysteine pairs are disulfide-bonded: cysteine 48–cysteine 90, cysteine 76–cysteine 108, cysteine 113–cysteine 156, cysteine 138–cysteine 168, cysteine 171–cysteine 215, cysteine 201–cysteine 228, cysteine 234–cysteine 280, and cysteine 265–cysteine 293. Residues asparagine 95 and asparagine 125 are each glycosylated (N-linked (GlcNAc...) asparagine). Asparagine 183 carries an N-linked (GlcNAc...) asparagine glycan. A helical membrane pass occupies residues 311–331 (WKVVACTATSVLLALLLVITA). Residues 374–484 (SGNYCQPPND…PLVEDGEEDC (111 aa)) form a disordered region. Composition is skewed to polar residues over residues 424–442 (DSLSDTSECLQGLQPSSSH) and 449–467 (SEKTNAITSMEETASTSPS). The segment covering 470–484 (IADEIPLVEDGEEDC) has biased composition (acidic residues).

The protein localises to the membrane. This Danio rerio (Zebrafish) protein is Sushi domain-containing protein 4 (susd4).